Here is a 362-residue protein sequence, read N- to C-terminus: N5-carboxyaminoimidazole ribonucleotide synthase (362 aa).

ATP is bound by residues R85, K125, 130 to 136 (GYDGRGQ), 158 to 161 (EKFI), E166, and 244 to 245 (NE). One can recognise an ATP-grasp domain in the interval 89–274 (KSLLDELNLS…QFELHLRALL (186 aa)).

Belongs to the PurK/PurT family. Homodimer.

It catalyses the reaction 5-amino-1-(5-phospho-beta-D-ribosyl)imidazole + hydrogencarbonate + ATP = 5-carboxyamino-1-(5-phospho-D-ribosyl)imidazole + ADP + phosphate + 2 H(+). It functions in the pathway purine metabolism; IMP biosynthesis via de novo pathway; 5-amino-1-(5-phospho-D-ribosyl)imidazole-4-carboxylate from 5-amino-1-(5-phospho-D-ribosyl)imidazole (N5-CAIR route): step 1/2. Catalyzes the ATP-dependent conversion of 5-aminoimidazole ribonucleotide (AIR) and HCO(3)(-) to N5-carboxyaminoimidazole ribonucleotide (N5-CAIR). This Haemophilus influenzae (strain ATCC 51907 / DSM 11121 / KW20 / Rd) protein is N5-carboxyaminoimidazole ribonucleotide synthase.